Reading from the N-terminus, the 106-residue chain is Large ribosomal subunit protein uL24 (106 aa).

Belongs to the universal ribosomal protein uL24 family. As to quaternary structure, part of the 50S ribosomal subunit.

One of two assembly initiator proteins, it binds directly to the 5'-end of the 23S rRNA, where it nucleates assembly of the 50S subunit. In terms of biological role, one of the proteins that surrounds the polypeptide exit tunnel on the outside of the subunit. The polypeptide is Large ribosomal subunit protein uL24 (Parabacteroides distasonis (strain ATCC 8503 / DSM 20701 / CIP 104284 / JCM 5825 / NCTC 11152)).